The following is a 331-amino-acid chain: Tryptophan--tRNA ligase (331 aa).

ATP contacts are provided by residues Gln-10 to Ser-12 and Gly-18 to Asn-19. Residues Pro-11–Asn-19 carry the 'HIGH' region motif. Asp-133 contacts L-tryptophan. ATP-binding positions include Gly-145–Asp-147, Val-184, and Lys-193–Ser-197. The 'KMSKS' region motif lies at Lys-193–Ser-197.

Belongs to the class-I aminoacyl-tRNA synthetase family. Homodimer.

It localises to the cytoplasm. It carries out the reaction tRNA(Trp) + L-tryptophan + ATP = L-tryptophyl-tRNA(Trp) + AMP + diphosphate + H(+). Functionally, catalyzes the attachment of tryptophan to tRNA(Trp). The polypeptide is Tryptophan--tRNA ligase (Listeria innocua serovar 6a (strain ATCC BAA-680 / CLIP 11262)).